A 276-amino-acid chain; its full sequence is Octanoyltransferase LipM (276 aa).

Positions 31-246 (GLIPPVIRFY…GFAKSLQIEL (216 aa)) constitute a BPL/LPL catalytic domain. Cysteine 148 (acyl-thioester intermediate) is an active-site residue.

Belongs to the octanoyltransferase LipM family. As to quaternary structure, monomer.

The enzyme catalyses octanoyl-[ACP] + L-lysyl-[protein] = N(6)-octanoyl-L-lysyl-[protein] + holo-[ACP] + H(+). Its pathway is protein modification; protein lipoylation via endogenous pathway; protein N(6)-(lipoyl)lysine from octanoyl-[acyl-carrier-protein]. Catalyzes the transfer of endogenously produced octanoic acid from octanoyl-acyl-carrier-protein onto the lipoyl domain of GcvH, an intermediate carrier during protein lipoylation. The sequence is that of Octanoyltransferase LipM from Lysinibacillus sphaericus (strain C3-41).